The chain runs to 205 residues: Ribosomal RNA large subunit methyltransferase E (205 aa).

Residues glycine 60, tryptophan 62, aspartate 80, aspartate 96, and aspartate 121 each coordinate S-adenosyl-L-methionine. The active-site Proton acceptor is lysine 161.

It belongs to the class I-like SAM-binding methyltransferase superfamily. RNA methyltransferase RlmE family.

The protein resides in the cytoplasm. The enzyme catalyses uridine(2552) in 23S rRNA + S-adenosyl-L-methionine = 2'-O-methyluridine(2552) in 23S rRNA + S-adenosyl-L-homocysteine + H(+). Its function is as follows. Specifically methylates the uridine in position 2552 of 23S rRNA at the 2'-O position of the ribose in the fully assembled 50S ribosomal subunit. The chain is Ribosomal RNA large subunit methyltransferase E from Chromobacterium violaceum (strain ATCC 12472 / DSM 30191 / JCM 1249 / CCUG 213 / NBRC 12614 / NCIMB 9131 / NCTC 9757 / MK).